A 126-amino-acid polypeptide reads, in one-letter code: Large ribosomal subunit protein bL19 (126 aa).

This sequence belongs to the bacterial ribosomal protein bL19 family.

In terms of biological role, this protein is located at the 30S-50S ribosomal subunit interface and may play a role in the structure and function of the aminoacyl-tRNA binding site. The chain is Large ribosomal subunit protein bL19 from Paracoccus denitrificans (strain Pd 1222).